A 34-amino-acid chain; its full sequence is MSDIN-like toxin proprotein 3 (34 aa).

Residues 1-10 (MSDINTARLP) constitute a propeptide that is removed on maturation. The cyclopeptide (Phe-Pro) cross-link spans 11 to 20 (FFQPPEFRPP). Positions 21–34 (CVGDDIEMVLTRGE) are excised as a propeptide.

Belongs to the MSDIN fungal toxin family. In terms of processing, processed by the macrocyclase-peptidase enzyme POPB to yield a toxic cyclic decapeptide. POPB first removes 10 residues from the N-terminus. Conformational trapping of the remaining peptide forces the enzyme to release this intermediate rather than proceed to macrocyclization. The enzyme rebinds the remaining peptide in a different conformation and catalyzes macrocyclization of the N-terminal 10 residues.

Functionally, probable toxin that belongs to the MSDIN-like toxin family responsible for a large number of food poisoning cases and deaths. This is MSDIN-like toxin proprotein 3 from Amanita bisporigera (Destroying angel).